Here is a 64-residue protein sequence, read N- to C-terminus: Large ribosomal subunit protein uL29 (64 aa).

Belongs to the universal ribosomal protein uL29 family.

The polypeptide is Large ribosomal subunit protein uL29 (Psychrobacter sp. (strain PRwf-1)).